The chain runs to 511 residues: 2-isopropylmalate synthase (511 aa).

Positions 5–267 constitute a Pyruvate carboxyltransferase domain; the sequence is LIVFDTTLRD…DTNVDISQIV (263 aa). Mn(2+)-binding residues include D14, H202, H204, and N238. The segment at 393-511 is regulatory domain; it reads KLSWLKVVSE…YPVERAYPQV (119 aa).

The protein belongs to the alpha-IPM synthase/homocitrate synthase family. LeuA type 1 subfamily. Homodimer. It depends on Mn(2+) as a cofactor.

It is found in the cytoplasm. The enzyme catalyses 3-methyl-2-oxobutanoate + acetyl-CoA + H2O = (2S)-2-isopropylmalate + CoA + H(+). It participates in amino-acid biosynthesis; L-leucine biosynthesis; L-leucine from 3-methyl-2-oxobutanoate: step 1/4. Catalyzes the condensation of the acetyl group of acetyl-CoA with 3-methyl-2-oxobutanoate (2-ketoisovalerate) to form 3-carboxy-3-hydroxy-4-methylpentanoate (2-isopropylmalate). This chain is 2-isopropylmalate synthase, found in Nitrosococcus oceani (strain ATCC 19707 / BCRC 17464 / JCM 30415 / NCIMB 11848 / C-107).